The sequence spans 650 residues: Acetyl-coenzyme A synthetase (650 aa).

CoA is bound by residues arginine 191 to arginine 194, threonine 311, and asparagine 335. ATP-binding positions include glycine 387–proline 389, aspartate 411–threonine 416, aspartate 500, and arginine 515. Serine 523 is a binding site for CoA. Arginine 526 is a binding site for ATP. Mg(2+) contacts are provided by valine 537, histidine 539, and valine 542. CoA is bound at residue arginine 584. Lysine 609 carries the post-translational modification N6-acetyllysine.

The protein belongs to the ATP-dependent AMP-binding enzyme family. Requires Mg(2+) as cofactor. In terms of processing, acetylated. Deacetylation by the SIR2-homolog deacetylase activates the enzyme.

It carries out the reaction acetate + ATP + CoA = acetyl-CoA + AMP + diphosphate. Its function is as follows. Catalyzes the conversion of acetate into acetyl-CoA (AcCoA), an essential intermediate at the junction of anabolic and catabolic pathways. AcsA undergoes a two-step reaction. In the first half reaction, AcsA combines acetate with ATP to form acetyl-adenylate (AcAMP) intermediate. In the second half reaction, it can then transfer the acetyl group from AcAMP to the sulfhydryl group of CoA, forming the product AcCoA. The chain is Acetyl-coenzyme A synthetase from Shewanella sp. (strain W3-18-1).